Consider the following 148-residue polypeptide: UPF0178 protein DP1304 (148 aa).

It belongs to the UPF0178 family.

This Desulfotalea psychrophila (strain LSv54 / DSM 12343) protein is UPF0178 protein DP1304.